Here is a 219-residue protein sequence, read N- to C-terminus: Proline-rich protein 27 (219 aa).

The signal sequence occupies residues 1–15; it reads MKLLLWACIVCVAFA. The span at 155–204 shows a compositional bias: low complexity; sequence AAEPAAEAPVGAEPAAEAPVAAEPAAEAPVGVEPAAEEPSPAEPATAKPA. The disordered stretch occupies residues 155-219; that stretch reads AAEPAAEAPV…PSPSLEQANQ (65 aa).

It is found in the secreted. This Homo sapiens (Human) protein is Proline-rich protein 27 (PRR27).